A 314-amino-acid polypeptide reads, in one-letter code: MRFKGLDLNLLVALDALMTERNLTAAARSINLSQPAMSAAVGRLRTYFNDDLFTMVGRELVPTPRAERLAPSVREALLHIQVSIISWDPFCPAQSDRCFRVILSDYAALVFFEKVVTRVAREAPAVSFELLPIADNYDEYLRRGDADFLIFPELLMSRAHPKVALFEETLVCVGCHSNKLLSEQLTLERYMSMGHVVVKFGNARTASFEEWCLLGHGLKRHVEVVVQGFSMVPFMLSGTERIATMPLRLVKQLEKTIPLRIADLPLPLPAFTQALQWPALHNSGQASLWMRDVLCQEASRMPSPHEVMRRLRIS.

In terms of domain architecture, HTH lysR-type spans 6–63; that stretch reads LDLNLLVALDALMTERNLTAAARSINLSQPAMSAAVGRLRTYFNDDLFTMVGRELVPT. The segment at residues 23 to 42 is a DNA-binding region (H-T-H motif); sequence LTAAARSINLSQPAMSAAVG.

The protein belongs to the LysR transcriptional regulatory family.

Functionally, nodD regulates the expression of the nodABCFE genes which encode other nodulation proteins. NodD is also a negative regulator of its own expression. Binds flavonoids as inducers. The protein is Nodulation protein D 1 (nodD1) of Rhizobium leguminosarum bv. phaseoli.